Reading from the N-terminus, the 276-residue chain is Aldo-keto reductase Mjls_1919 (276 aa).

Catalysis depends on Tyr50, which acts as the Proton donor. Residues Leu190, Ile228, Lys230, Ser231, Val232, Arg236, Ser239, and Asn240 each coordinate NADPH.

Belongs to the aldo/keto reductase family.

The polypeptide is Aldo-keto reductase Mjls_1919 (Mycobacterium sp. (strain JLS)).